The following is a 213-amino-acid chain: Holliday junction resolvase RecU (213 aa).

The Mg(2+) site is built by Thr99, Asp101, Glu114, and Gln133.

It belongs to the RecU family. The cofactor is Mg(2+).

It localises to the cytoplasm. It carries out the reaction Endonucleolytic cleavage at a junction such as a reciprocal single-stranded crossover between two homologous DNA duplexes (Holliday junction).. Functionally, endonuclease that resolves Holliday junction intermediates in genetic recombination. Cleaves mobile four-strand junctions by introducing symmetrical nicks in paired strands. Promotes annealing of linear ssDNA with homologous dsDNA. Required for DNA repair, homologous recombination and chromosome segregation. The polypeptide is Holliday junction resolvase RecU (Lactococcus lactis subsp. cremoris (strain MG1363)).